The primary structure comprises 876 residues: Serrate RNA effector molecule homolog (876 aa).

The interval 1 to 90 (MGDSDDEYDR…RRDWDEHSSD (90 aa)) is disordered. Glycine 2 is subject to N-acetylglycine. At serine 4 the chain carries Phosphoserine. Residue tyrosine 8 is modified to Phosphotyrosine. The span at 8 to 73 (YDRRRRDKFR…ERFSPPRHEL (66 aa)) shows a compositional bias: basic and acidic residues. 3 positions are modified to phosphoserine: serine 67, serine 74, and serine 136. Lysine 150 participates in a covalent cross-link: Glycyl lysine isopeptide (Lys-Gly) (interchain with G-Cter in SUMO2). Residues 272 to 413 (EEEEQAGKPG…PKDAPGLECK (142 aa)) form a disordered region. Over residues 297-347 (DGERKANEKDDKKEDGKQAENESSSDDKIKKSEGDGDKEEKKEDSEKEAKK) the composition is skewed to basic and acidic residues. Acidic residues predominate over residues 370–387 (SESESESGQAEEEKEEAD). The segment covering 388 to 413 (ETLKEKEKPKEEEREKPKDAPGLECK) has biased composition (basic and acidic residues). Serine 493 bears the Phosphoserine mark. Phosphothreonine is present on threonine 544. Serine 570 is subject to Phosphoserine. The tract at residues 575 to 597 (ELLGSSGGAPPEEPPKEGNPAEI) is disordered. Phosphothreonine is present on threonine 671. Serine 679 bears the Phosphoserine mark. Arginine 833, arginine 840, and arginine 850 each carry omega-N-methylarginine. A disordered region spans residues 835–854 (NYDAFRGQGGYPGKPRNRMV).

This sequence belongs to the ARS2 family. As to quaternary structure, interacts with CASP8AP2, ERBB4, NCBP1/CBP80 and DROSHA. Interacts with LUZP4. Interacts with NCBP2/CBP20 and NCBP3. Interacts with MTREX.

The protein localises to the nucleus. The protein resides in the nucleoplasm. Its subcellular location is the cytoplasm. Its function is as follows. Acts as a mediator between the cap-binding complex (CBC) and the primary microRNAs (miRNAs) processing machinery during cell proliferation. Contributes to the stability and delivery of capped primary miRNA transcripts to the primary miRNA processing complex containing DGCR8 and DROSHA, thereby playing a role in RNA-mediated gene silencing (RNAi) by miRNAs. Binds capped RNAs (m7GpppG-capped RNA); however interaction is probably mediated via its interaction with NCBP1/CBP80 component of the CBC complex. Involved in cell cycle progression at S phase. Does not directly confer arsenite resistance but rather modulates arsenic sensitivity. Independently of its activity on miRNAs, necessary and sufficient to promote neural stem cell self-renewal. Does so by directly binding SOX2 promoter and positively regulating its transcription. In Bos taurus (Bovine), this protein is Serrate RNA effector molecule homolog (SRRT).